We begin with the raw amino-acid sequence, 343 residues long: Cytoplasmic tRNA 2-thiolation protein 1 (343 aa).

This sequence belongs to the TtcA family. CTU1/NCS6/ATPBD3 subfamily.

The protein resides in the cytoplasm. Its pathway is tRNA modification; 5-methoxycarbonylmethyl-2-thiouridine-tRNA biosynthesis. Functionally, plays a central role in 2-thiolation of mcm(5)S(2)U at tRNA wobble positions of tRNA(Lys), tRNA(Glu) and tRNA(Gln). Directly binds tRNAs and probably acts by catalyzing adenylation of tRNAs, an intermediate required for 2-thiolation. It is unclear whether it acts as a sulfurtransferase that transfers sulfur from thiocarboxylated URM1 onto the uridine of tRNAs at wobble position. This chain is Cytoplasmic tRNA 2-thiolation protein 1, found in Drosophila pseudoobscura pseudoobscura (Fruit fly).